Reading from the N-terminus, the 93-residue chain is NADH-ubiquinone oxidoreductase chain 4L (93 aa).

Helical transmembrane passes span 1 to 21, 29 to 49, and 54 to 74; these read MVWMKFLGVLLMSMGCFVIFR, LFVGLEMMSLGLLFVTHVFLM, and LILLILCLAVCEASICLALLV.

The protein belongs to the complex I subunit 4L family.

The protein resides in the mitochondrion membrane. It catalyses the reaction a ubiquinone + NADH + 5 H(+)(in) = a ubiquinol + NAD(+) + 4 H(+)(out). Its function is as follows. Core subunit of the mitochondrial membrane respiratory chain NADH dehydrogenase (Complex I) that is believed to belong to the minimal assembly required for catalysis. Complex I functions in the transfer of electrons from NADH to the respiratory chain. The immediate electron acceptor for the enzyme is believed to be ubiquinone. This Mytilus edulis (Blue mussel) protein is NADH-ubiquinone oxidoreductase chain 4L (ND4L).